The following is a 311-amino-acid chain: Aspartate carbamoyltransferase catalytic subunit (311 aa).

Positions 58 and 59 each coordinate carbamoyl phosphate. Lysine 86 contributes to the L-aspartate binding site. Arginine 108, histidine 136, and glutamine 139 together coordinate carbamoyl phosphate. Positions 169 and 223 each coordinate L-aspartate. Glycine 264 and proline 265 together coordinate carbamoyl phosphate.

It belongs to the aspartate/ornithine carbamoyltransferase superfamily. ATCase family. Heterododecamer (2C3:3R2) of six catalytic PyrB chains organized as two trimers (C3), and six regulatory PyrI chains organized as three dimers (R2).

It catalyses the reaction carbamoyl phosphate + L-aspartate = N-carbamoyl-L-aspartate + phosphate + H(+). Its pathway is pyrimidine metabolism; UMP biosynthesis via de novo pathway; (S)-dihydroorotate from bicarbonate: step 2/3. Catalyzes the condensation of carbamoyl phosphate and aspartate to form carbamoyl aspartate and inorganic phosphate, the committed step in the de novo pyrimidine nucleotide biosynthesis pathway. The protein is Aspartate carbamoyltransferase catalytic subunit of Pelodictyon phaeoclathratiforme (strain DSM 5477 / BU-1).